The sequence spans 129 residues: Large ribosomal subunit protein bL12 (129 aa).

The span at 95 to 123 shows a compositional bias: basic and acidic residues; it reads MVESTPKSIKEGVSKEDAEEAKKSLEDAG. Positions 95–129 are disordered; the sequence is MVESTPKSIKEGVSKEDAEEAKKSLEDAGGKASLK.

The protein belongs to the bacterial ribosomal protein bL12 family. Homodimer. Part of the ribosomal stalk of the 50S ribosomal subunit. Forms a multimeric L10(L12)X complex, where L10 forms an elongated spine to which 2 to 4 L12 dimers bind in a sequential fashion. Binds GTP-bound translation factors.

Forms part of the ribosomal stalk which helps the ribosome interact with GTP-bound translation factors. Is thus essential for accurate translation. The protein is Large ribosomal subunit protein bL12 of Acaryochloris marina (strain MBIC 11017).